Reading from the N-terminus, the 942-residue chain is Serine/threonine-protein kinase ATG1 (942 aa).

Positions 11-312 (YVVEKEIGKG…FEEFFNNKIV (302 aa)) constitute a Protein kinase domain. ATP is bound by residues 17-25 (IGKGSFATV) and K41. D159 serves as the catalytic Proton acceptor. Polar residues predominate over residues 435-452 (NSSRVNKLDKSNLSGKSD). Disordered regions lie at residues 435-454 (NSSR…SDSS), 505-529 (QPHN…SRRA), and 817-836 (NSKP…NDSN). Residues 515 to 529 (RAPSTTSGGTSSRRA) are compositionally biased toward low complexity. Over residues 819-834 (KPGTHNQSPKSKISND) the composition is skewed to polar residues.

The protein belongs to the protein kinase superfamily. Ser/Thr protein kinase family. APG1/unc-51/ULK1 subfamily. In terms of assembly, homodimer. Forms a ternary complex with ATG13 and ATG17.

It is found in the cytoplasm. It localises to the preautophagosomal structure membrane. It catalyses the reaction L-seryl-[protein] + ATP = O-phospho-L-seryl-[protein] + ADP + H(+). It carries out the reaction L-threonyl-[protein] + ATP = O-phospho-L-threonyl-[protein] + ADP + H(+). Functionally, serine/threonine protein kinase involved in the cytoplasm to vacuole transport (Cvt) and found to be essential in autophagy, where it is required for the formation of autophagosomes. Involved in the clearance of protein aggregates which cannot be efficiently cleared by the proteasome. Required for selective autophagic degradation of the nucleus (nucleophagy) as well as for mitophagy which contributes to regulate mitochondrial quantity and quality by eliminating the mitochondria to a basal level to fulfill cellular energy requirements and preventing excess ROS production. Also involved in endoplasmic reticulum-specific autophagic process, in selective removal of ER-associated degradation (ERAD) substrates. Plays a key role in ATG9 and ATG23 cycling through the pre-autophagosomal structure and is necessary to promote ATG18 binding to ATG9 through phosphorylation of ATG9. Catalyzes phosphorylation of ATG4, decreasing the interaction between ATG4 and ATG8 and impairing deconjugation of PE-conjugated forms of ATG8. Contributes to virulence by conferring resistance to unstable nutrient environments and immune defense of hosts. The protein is Serine/threonine-protein kinase ATG1 of Candida glabrata (strain ATCC 2001 / BCRC 20586 / JCM 3761 / NBRC 0622 / NRRL Y-65 / CBS 138) (Yeast).